The sequence spans 284 residues: MKIPRGIKIILRWVVTLYIYGFILYQITPFSYFETYIPEERLAPKPYVERIFYLFGVKSNEYPSKEVLEFLKSMDVDLVYGFFPFEDYGIFKNSLKAPECHLIYTSEISTFHRILNFLFDYVPKKITGNETRTFHYFIKPKLGKCNVIVQDVYLSPNFLDFKLDHSRNMVYKRLWEDLQLEQNVITNGRKSVDVYAYSTKSMYYPSESTIYPFKLYAKSNEEKTLIIVYRDGKVYRIYDERSTVLKINKPGKYSVKILTYAFSWEGYYFGLRTIAYSAPITLLY.

Residues 9 to 28 (IILRWVVTLYIYGFILYQIT) traverse the membrane as a helical segment.

The protein localises to the membrane. This is an uncharacterized protein from Aquifex aeolicus (strain VF5).